Here is a 942-residue protein sequence, read N- to C-terminus: MLKFLTPTAYASHHVTPATRFRSTPVKNLLFKQLTLLTGWNRSSYELGRRSFSSDLDSDTKSSTTTVSAKPHLDDCLTVIALPLPHKPLIPGFYMPIYVKDPKVLAALQESRRQQAPYAGAFLLKDDASSDSSSSSETENILEKLKGKELINRIHEVGTLAQISSIQGEQVILIGHRQLRITEMVSESEDPLTVKVDHLKDKPYDKDDDVIKATYFQVMSTLRDVLKTTSLWRDHVRTYTQACSLHIWHCLRHIGEFNYPKLADFGAGISGANKHQNQGVLEELDVHKRLELTLELVKKEVEINKIQESIAKAVEEKFSGDRRRIILKEQINAIKKELGGETDSKSALSEKFRGRIDPIKDKIPGHVLKVIEEELKKLQLLETSSSEFDVTCNYLDWLTVLPWGNFSDENFNVLRAEKILDEDHYGLSDVKERILEFIAVGGLRGTSQGKIICLSGPTGVGKTSIGRSIARALDRKFFRFSVGGLSDVAEIKGHRRTYIGAMPGKMVQCLKNVGTENPLVLIDEIDKLGVRGHHGDPASAMLELLDPEQNANFLDHYLDVPIDLSKVLFVCTANVTDTIPGPLLDRMEVITLSGYITDEKMHIARDYLEKTARRDCGIKPEQVDVSDAAFLSLIEHYCREAGVRNLQKQIEKIFRKIALKLVRKAASTEVPRISDDVTTDTEETKSLAKTDLESPETSAEGSTVLTDELATGDPTESTTEQSGEVAETVEKYMIDESNLSDYVGKPVFQEEKIYEQTPVGVVMGLAWTSMGGSTLYIETTFVEEGEGKGGLHITGRLGDVMKESAEIAHTVARRIMLEKEPENKLFANSKLHLHVPAGATPKDGPSAGCTMITSLLSLALKKPVRKDLAMTGEVTLTGRILAIGGVKEKTIAARRSQVKVIIFPEANRRDFDELARNVKEGLEVHFVDEYEQIFELAFGYDH.

Ser54 is modified (phosphoserine). One can recognise a Lon N-terminal domain in the interval 79-301; sequence VIALPLPHKP…LTLELVKKEV (223 aa). 456-463 provides a ligand contact to ATP; it reads GPTGVGKT. Residues 673–725 are disordered; it reads ISDDVTTDTEETKSLAKTDLESPETSAEGSTVLTDELATGDPTESTTEQSGEV. Over residues 682-692 the composition is skewed to basic and acidic residues; that stretch reads EETKSLAKTDL. Residues 695-705 show a composition bias toward polar residues; it reads PETSAEGSTVL. The region spanning 756–940 is the Lon proteolytic domain; that stretch reads QTPVGVVMGL…EQIFELAFGY (185 aa). Active-site residues include Ser846 and Lys889.

It belongs to the peptidase S16 family. As to quaternary structure, homohexamer or homoheptamer. Organized in a ring with a central cavity.

It is found in the mitochondrion matrix. The protein localises to the plastid. The protein resides in the chloroplast thylakoid membrane. It carries out the reaction Hydrolysis of proteins in presence of ATP.. ATP-dependent serine protease that mediates the selective degradation of misfolded, unassembled or oxidatively damaged polypeptides as well as certain short-lived regulatory proteins in the mitochondrial matrix. May also have a chaperone function in the assembly of inner membrane protein complexes. Participates in the regulation of mitochondrial gene expression and in the maintenance of the integrity of the mitochondrial genome. Binds to mitochondrial DNA in a site-specific manner. The sequence is that of Lon protease homolog 4, chloroplastic/mitochondrial (LON4) from Arabidopsis thaliana (Mouse-ear cress).